We begin with the raw amino-acid sequence, 239 residues long: Fatty acid metabolism regulator protein (239 aa).

One can recognise an HTH gntR-type domain in the interval 6 to 74 (QSPAGFAEEY…HGKPTKVNNF (69 aa)). Positions 34–53 (ERELSELIGVTRTTLREVLQ) form a DNA-binding region, H-T-H motif.

Homodimer.

The protein resides in the cytoplasm. Multifunctional regulator of fatty acid metabolism. The sequence is that of Fatty acid metabolism regulator protein from Klebsiella pneumoniae subsp. pneumoniae (strain ATCC 700721 / MGH 78578).